Here is a 352-residue protein sequence, read N- to C-terminus: Adenosine deaminase (352 aa).

An N-acetylalanine modification is found at Ala2. The Zn(2+) site is built by His15 and His17. The substrate site is built by His17 and Asp19. Lys54 carries the N6-acetyllysine modification. Gly184 contacts substrate. His214 provides a ligand contact to Zn(2+). The Proton donor role is filled by Glu217. Position 232 is an N6-acetyllysine (Lys232). Position 295 (Asp295) interacts with Zn(2+). Asp296 serves as a coordination point for substrate.

This sequence belongs to the metallo-dependent hydrolases superfamily. Adenosine and AMP deaminases family. Interacts with DPP4 (via extracellular domain). Interacts with PLG (via Kringle 4 domain); the interaction stimulates PLG activation when in complex with DPP4. Requires Zn(2+) as cofactor. As to expression, detected in brain and liver (at protein level).

Its subcellular location is the cell membrane. It localises to the cell junction. The protein resides in the cytoplasmic vesicle lumen. The protein localises to the cytoplasm. It is found in the lysosome. The catalysed reaction is adenosine + H2O + H(+) = inosine + NH4(+). It catalyses the reaction 2'-deoxyadenosine + H2O + H(+) = 2'-deoxyinosine + NH4(+). It carries out the reaction cordycepin + H2O + H(+) = 3'-deoxyinosine + NH4(+). Its function is as follows. Catalyzes the hydrolytic deamination of adenosine and 2-deoxyadenosine. Plays an important role in purine metabolism and in adenosine homeostasis. Modulates signaling by extracellular adenosine, and so contributes indirectly to cellular signaling events. Acts as a positive regulator of T-cell coactivation, by binding DPP4. Its interaction with DPP4 regulates lymphocyte-epithelial cell adhesion. Enhances dendritic cell immunogenicity by affecting dendritic cell costimulatory molecule expression and cytokines and chemokines secretion. Enhances CD4+ T-cell differentiation and proliferation. Acts as a positive modulator of adenosine receptors ADORA1 and ADORA2A, by enhancing their ligand affinity via conformational change. Stimulates plasminogen activation. Plays a role in male fertility. Plays a protective role in early postimplantation embryonic development. Also responsible for the deamination of cordycepin (3'-deoxyadenosine), a fungal natural product that shows antitumor, antibacterial, antifungal, antivirus, and immune regulation properties. The protein is Adenosine deaminase (Ada) of Rattus norvegicus (Rat).